Consider the following 190-residue polypeptide: Transcription antitermination protein NusB (190 aa).

Residues 135 to 190 (APAPESVAEEADEESSDSAAAASEPTDEGDVSDSPDSSGASDEPAAPSAEIQPTVD) form a disordered region. A compositionally biased stretch (acidic residues) spans 141–150 (VAEEADEESS).

This sequence belongs to the NusB family.

Its function is as follows. Involved in transcription antitermination. Required for transcription of ribosomal RNA (rRNA) genes. Binds specifically to the boxA antiterminator sequence of the ribosomal RNA (rrn) operons. This is Transcription antitermination protein NusB from Bifidobacterium longum (strain DJO10A).